We begin with the raw amino-acid sequence, 1091 residues long: Self-sufficient cytochrome P450 monooxygenase CYP505E1 (1091 aa).

Cysteine 433 provides a ligand contact to heme. Positions 528–669 (ICFFYGSNSG…DLEAWEETSL (142 aa)) constitute a Flavodoxin-like domain. Residues 534-538 (SNSGT) and 613-645 (VFGC…TRLA) each bind FMN. Positions 707–935 (KDLMEARVTT…RPAKEAFHLP (229 aa)) constitute an FAD-binding FR-type domain.

The protein in the N-terminal section; belongs to the cytochrome P450 family. FAD serves as cofactor. FMN is required as a cofactor. It depends on heme as a cofactor.

It carries out the reaction 2 oxidized [cytochrome P450] + NADPH = 2 reduced [cytochrome P450] + NADP(+) + H(+). It catalyses the reaction an organic molecule + reduced [NADPH--hemoprotein reductase] + O2 = an alcohol + oxidized [NADPH--hemoprotein reductase] + H2O + H(+). The catalysed reaction is dodecanoate + reduced [NADPH--hemoprotein reductase] + O2 = 5-hydroxydodecanoate + oxidized [NADPH--hemoprotein reductase] + H2O + H(+). The enzyme catalyses tetradecanoate + reduced [NADPH--hemoprotein reductase] + O2 = 7-hydroxytetradecanoate + oxidized [NADPH--hemoprotein reductase] + H2O + H(+). It carries out the reaction dodecan-1-ol + reduced [NADPH--hemoprotein reductase] + O2 = 1,5-dodecanediol + oxidized [NADPH--hemoprotein reductase] + H2O + H(+). It catalyses the reaction dodecan-1-ol + reduced [NADPH--hemoprotein reductase] + O2 = 1,4-dodecanediol + oxidized [NADPH--hemoprotein reductase] + H2O + H(+). The catalysed reaction is dodecan-1-ol + reduced [NADPH--hemoprotein reductase] + O2 = 1,6-dodecanediol + oxidized [NADPH--hemoprotein reductase] + H2O + H(+). Its function is as follows. Self-sufficient cytochrome P450 monooxygenase that catalyzes the regioselective in-chain hydroxylation of alkanes, fatty alcohols, and fatty acids at the omega-7 position. Performs hydroxylation of C10-C16 n-alkanes and C12 and C14 fatty alcohols; and thereby enables the one step biocatalytic synthesis of rare alcohols such as 5-dodecanol and 7-tetradecanol. Converts 1-dodecanol into 1,5-dodecanediol as major product with very little sub-terminally hydroxylated products with the 1,4-dodecanediol and 1,6-dodecanediol more abundant. Converts dodecanoic acid to 5-hydroxydodecanoic acid which can be further converted into delta-dodecalactone by lactonization of the 5-hydroxy acid at low pH. Also gives sub-terminal hydroxylation of dodecanoic acid with 9-hydroxydodecanoic acid being the second most abundant product. The sequence is that of Self-sufficient cytochrome P450 monooxygenase CYP505E1 from Aspergillus niger (strain ATCC MYA-4892 / CBS 513.88 / FGSC A1513).